Reading from the N-terminus, the 783-residue chain is Centrosomal protein of 89 kDa (783 aa).

Residues 28–49 form a disordered region; the sequence is PKAAVPRTPPPRSPNPSPERPR. Residues 34–45 are compositionally biased toward pro residues; the sequence is RTPPPRSPNPSP. Ser50 carries the phosphoserine modification. 2 disordered regions span residues 63–157 and 176–226; these read GRTV…DDLY and DENI…DITG. The span at 94 to 107 shows a compositional bias: polar residues; sequence ATTSQLRPRPNWQS. Basic and acidic residues-rich tracts occupy residues 139–155 and 196–214; these read ELGD…HSDD and QQKD…KPPL. Coiled coils occupy residues 234–333 and 369–719; these read EITR…SRYQ and LLLA…GELE.

It is found in the cytoplasm. The protein resides in the cytosol. The protein localises to the cytoskeleton. Its subcellular location is the microtubule organizing center. It localises to the centrosome. It is found in the spindle pole. The protein resides in the centriole. The protein localises to the mitochondrion intermembrane space. Its function is as follows. Required for ciliogenesis. Also plays a role in mitochondrial metabolism where it may modulate complex IV activity. This is Centrosomal protein of 89 kDa (CEP89) from Homo sapiens (Human).